Here is a 387-residue protein sequence, read N- to C-terminus: Dual specificity protein phosphatase MPK-4 (387 aa).

A compositionally biased stretch (polar residues) spans 1–15; the sequence is MEQSQSQRQAWPSSS. The disordered stretch occupies residues 1 to 27; that stretch reads MEQSQSQRQAWPSSSAGGGKAQDSGVL. In terms of domain architecture, Tyrosine-protein phosphatase spans 35 to 182; sequence GPVSIDEVDT…LKLFRRMGCK (148 aa). Catalysis depends on cysteine 126, which acts as the Phosphocysteine intermediate. The tract at residues 248-267 is disordered; sequence LEHKPRDRPPQEVVPKEKEE.

The protein belongs to the protein-tyrosine phosphatase family. Non-receptor class dual specificity subfamily. As to quaternary structure, interacts (via tyrosine-protein phosphatase domain) with bsk/JNK; the interaction dephosphorylates bsk.

The protein localises to the nucleus. It is found in the cytoplasm. It catalyses the reaction O-phospho-L-tyrosyl-[protein] + H2O = L-tyrosyl-[protein] + phosphate. The enzyme catalyses O-phospho-L-seryl-[protein] + H2O = L-seryl-[protein] + phosphate. The catalysed reaction is O-phospho-L-threonyl-[protein] + H2O = L-threonyl-[protein] + phosphate. With respect to regulation, inhibited by the tyrosine phosphatase inhibitor sodium vanadate. In terms of biological role, dual specificity phosphatase; can dephosphorylate both phosphotyrosine and phosphoserine or phosphothreonine residues. May suppress bsk/JNK activation during the immune response. This chain is Dual specificity protein phosphatase MPK-4, found in Drosophila melanogaster (Fruit fly).